Reading from the N-terminus, the 93-residue chain is Small ribosomal subunit protein uS19 (93 aa).

Belongs to the universal ribosomal protein uS19 family.

Protein S19 forms a complex with S13 that binds strongly to the 16S ribosomal RNA. This Geobacter metallireducens (strain ATCC 53774 / DSM 7210 / GS-15) protein is Small ribosomal subunit protein uS19.